We begin with the raw amino-acid sequence, 438 residues long: MLRTHYSNEITEELNGKRVKVAGWVQEVKDLGGIKFVWIRDREGIVQITAPKKKVSEEIFKLIPKLNSEDVVVVEGIVNFTPKAKLGFEIIPEKFEILNRTQTPLPLDPTGKVKAELDTRLDNRFIDLRNPKVMAIFKIRSNVFRAIREFFYNEGFIEIHTPKIIATATEGGTELFPIKYFENDAFLAQSPQLYKQIMMATGLDKVFETAPIFRAEEHNTTRHLNEAWSIDAEIAFIENEEEVMDVLENLVVYAINYVREHNERELKILEFELEEPKQPFPRVTYDKALEILSDLGKEIPWGEDIDTEGEKLLGKYMSENEGVELYFIYKYPSEAKPFYIMKYDEKPEICRAFDLEYRGIEISSGGQREHRYEVLLEQIKEKGLNPESFEFYLKAFKYGMPPHGGFGLGAERLIMRMLNIGNIREVILFPRDRKRLIP.

Glutamate 170 serves as a coordination point for L-aspartate. Positions 192-195 (QLYK) are aspartate. Residue arginine 214 participates in L-aspartate binding. ATP contacts are provided by residues 214–216 (RAE), 222–224 (RHL), and glutamate 361. The Mg(2+) site is built by glutamate 361 and serine 364. L-aspartate contacts are provided by serine 364 and arginine 368. Position 409–412 (409–412 (GAER)) interacts with ATP.

This sequence belongs to the class-II aminoacyl-tRNA synthetase family. Type 2 subfamily. As to quaternary structure, homodimer. It depends on Mg(2+) as a cofactor.

The protein localises to the cytoplasm. It catalyses the reaction tRNA(Asp) + L-aspartate + ATP = L-aspartyl-tRNA(Asp) + AMP + diphosphate. Its function is as follows. Catalyzes the attachment of L-aspartate to tRNA(Asp) in a two-step reaction: L-aspartate is first activated by ATP to form Asp-AMP and then transferred to the acceptor end of tRNA(Asp). This Pyrococcus furiosus (strain ATCC 43587 / DSM 3638 / JCM 8422 / Vc1) protein is Aspartate--tRNA(Asp) ligase.